The sequence spans 390 residues: tRNA-specific 2-thiouridylase MnmA (390 aa).

ATP is bound by residues Ala-33–Ser-40 and Met-59. Residue Cys-131 is the Nucleophile of the active site. A disulfide bridge connects residues Cys-131 and Cys-230. Gly-155 contacts ATP. The segment at Lys-180 to Gln-182 is interaction with tRNA. Cys-230 serves as the catalytic Cysteine persulfide intermediate.

Belongs to the MnmA/TRMU family.

The protein localises to the cytoplasm. It carries out the reaction S-sulfanyl-L-cysteinyl-[protein] + uridine(34) in tRNA + AH2 + ATP = 2-thiouridine(34) in tRNA + L-cysteinyl-[protein] + A + AMP + diphosphate + H(+). Catalyzes the 2-thiolation of uridine at the wobble position (U34) of tRNA, leading to the formation of s(2)U34. This chain is tRNA-specific 2-thiouridylase MnmA, found in Symbiobacterium thermophilum (strain DSM 24528 / JCM 14929 / IAM 14863 / T).